A 1135-amino-acid chain; its full sequence is Integrin alpha-7 (1135 aa).

The signal sequence occupies residues 1-33 (MARIPRCDFLGLPGICYLLSFLLAGLLLPRASA). The Extracellular portion of the chain corresponds to 34 to 1036 (FNLDVMGAIR…VAVVAEGVPW (1003 aa)). FG-GAP repeat units follow at residues 38-103 (VMGA…ETDC), 110-165 (RGAN…RCFV), 185-238 (EGRP…DPDQ), 248-305 (DRLT…ASRL), 306-367 (IPEV…HWAD), 368-423 (ISPL…GVVT), and 427-486 (QVLE…IDPR). N-linked (GlcNAc...) asparagine glycosylation is present at asparagine 86. 3 cysteine pairs are disulfide-bonded: cysteine 94/cysteine 103, cysteine 140/cysteine 163, and cysteine 184/cysteine 197. Residues aspartate 328, asparagine 330, aspartate 332, aspartate 336, aspartate 390, asparagine 392, aspartate 394, aspartate 398, aspartate 448, aspartate 450, asparagine 452, tyrosine 454, and aspartate 456 each coordinate Ca(2+). 6 disulfides stabilise this stretch: cysteine 495–cysteine 502, cysteine 508–cysteine 571, cysteine 637–cysteine 643, cysteine 736–cysteine 747, cysteine 894–cysteine 948, and cysteine 955–cysteine 960. An N-linked (GlcNAc...) asparagine glycan is attached at asparagine 741. Positions 905-916 (VDSRDRRRRELG) are enriched in basic and acidic residues. The interval 905 to 933 (VDSRDRRRRELGQPEPQEPPEKVEPSTSW) is disordered. Asparagine 943 is a glycosylation site (N-linked (GlcNAc...) asparagine). 2 N-linked (GlcNAc...) asparagine glycosylation sites follow: asparagine 979 and asparagine 999. The helical transmembrane segment at 1037 to 1057 (WVILLAVLAGLLVLALLVLLL) threads the bilayer. The Cytoplasmic segment spans residues 1058 to 1135 (WKLGFFKRAK…PDGHPVSVTA (78 aa)). Positions 1061–1065 (GFFKR) match the GFFKR motif motif. Tandem repeats lie at residues 1111-1114 (DAHP), 1119-1122 (DWHP), and 1127-1130 (DGHP). Positions 1111-1130 (DAHPILAADWHPELGPDGHP) are 3 X 4 AA repeats of D-X-H-P.

The protein belongs to the integrin alpha chain family. Interacts (via C-terminus intracellular tail region) with CIB1; the interaction is stabilized/increased in a calcium- and magnesium-dependent manner. Heterodimer of an alpha and a beta subunit. The alpha subunit is composed of a heavy and a light chain linked by a disulfide bond. Alpha-7 associates with beta-1. Interacts with COMP. ADP-ribosylated on at least two sites of the extracellular domain in skeletal myotubes. Post-translationally, a 70 kDa form is created by proteolytic cleavage. Cleavage is elevated during myogenic differentiation and the cleaved form enhances cell adhesion and spreading on laminin. As to expression, expressed in skeletal and cardiac muscle. Expressed in replicating myoblasts. In differentiated muscle fibers localizes between fibers and the surrounding matrix. Isoform Alpha-7X1A and isoform Alpha-7X1B are expressed at myotendinous and neuromuscular junctions; isoform Alpha-7X1C is expressed at neuromuscular junctions and at extrasynaptic sites.

It is found in the membrane. In terms of biological role, integrin alpha-7/beta-1 is the primary laminin receptor on skeletal myoblasts and adult myofibers. During myogenic differentiation, it may induce changes in the shape and mobility of myoblasts, and facilitate their localization at laminin-rich sites of secondary fiber formation. Involved in the maintenance of the myofibers cytoarchitecture as well as for their anchorage, viability and functional integrity. Required to promote contractile phenotype acquisition in differentiated airway smooth muscle (ASM) cells. Acts as a Schwann cell receptor for laminin-2. Acts as a receptor of COMP and mediates its effect on vascular smooth muscle cells (VSMCs) maturation. The sequence is that of Integrin alpha-7 (Itga7) from Rattus norvegicus (Rat).